A 291-amino-acid polypeptide reads, in one-letter code: Isopentenyl-diphosphate Delta-isomerase I, chloroplastic (291 aa).

A chloroplast-targeting transit peptide spans 1 to 52; the sequence is MSTASLFSFPSFHLRSLLPSLSSSSSSSSSRFAPPRLSPIRSPAPRTQLSVR. Serine 2 is subject to N-acetylthreonine. Residues 20 to 39 are compositionally biased toward low complexity; it reads SLSSSSSSSSSRFAPPRLSP. The disordered stretch occupies residues 20–43; the sequence is SLSSSSSSSSSRFAPPRLSPIRSP. A substrate-binding site is contributed by lysine 95. Mg(2+) is bound by residues histidine 99 and histidine 111. Residues 109-261 enclose the Nudix hydrolase domain; that stretch reads LLHRAFSVFL…AVKLSPWFRL (153 aa). Substrate is bound by residues arginine 130 and lysine 134. The active site involves cysteine 146. Residue serine 147 coordinates substrate. Residues 147 to 177 carry the Nudix box motif; the sequence is SHPLYRESELIEENVLGVRNAAQRKLFDELG. Glutamate 206 and glutamate 208 together coordinate Mg(2+). Residue glutamate 208 is part of the active site.

It belongs to the IPP isomerase type 1 family. Mg(2+) is required as a cofactor.

Its subcellular location is the plastid. The protein localises to the chloroplast. It localises to the cytoplasm. It catalyses the reaction isopentenyl diphosphate = dimethylallyl diphosphate. It participates in isoprenoid biosynthesis; dimethylallyl diphosphate biosynthesis; dimethylallyl diphosphate from isopentenyl diphosphate: step 1/1. The protein operates within porphyrin-containing compound metabolism; chlorophyll biosynthesis. In terms of biological role, catalyzes the 1,3-allylic rearrangement of the homoallylic substrate isopentenyl (IPP) to its highly electrophilic allylic isomer, dimethylallyl diphosphate (DMAPP). The chain is Isopentenyl-diphosphate Delta-isomerase I, chloroplastic (IPP1) from Arabidopsis thaliana (Mouse-ear cress).